A 117-amino-acid polypeptide reads, in one-letter code: Gamma-aminobutyric acid receptor-associated protein-like 3 (117 aa).

Positions 1–22 are interaction with beta-tubulin; sequence MKFQYKEVHPFEYRKKEGEKIR. The segment at 36–68 is interaction with GABRG2; the sequence is APKARVPDLDRRKYLVPSDLTDGQFYLLIRKRI. Residue glycine 116 is the site of Phosphatidylethanolamine amidated glycine attachment. Residue lysine 117 is a propeptide, removed in mature form.

It belongs to the ATG8 family. Interacts with GABRG2 and beta-tubulin. In terms of processing, the precursor molecule is cleaved by ATG4B to form the cytosolic form, GABARAPL3-I. This is activated by APG7L/ATG7, transferred to ATG3 and conjugated to phospholipid to form the membrane-bound form, GABARAPL3-II. ATG4B also mediates the delipidation required for GABARAPL1 recycling when autophagosomes fuse with lysosomes. As to expression, ubiquitous. Expressed at very high levels in the brain, heart, peripheral blood leukocytes, liver, kidney, placenta and skeletal muscle. Expressed at very low levels in thymus and small intestine.

It is found in the cytoplasm. It localises to the cytoskeleton. The protein resides in the cytoplasmic vesicle. The protein localises to the autophagosome membrane. In terms of biological role, ubiquitin-like modifier involved in autophagosome formation. Whereas LC3s are involved in elongation of the phagophore membrane, the GABARAP/GATE-16 subfamily is essential for a later stage in autophagosome maturation. This is Gamma-aminobutyric acid receptor-associated protein-like 3 (GABARAPL3) from Homo sapiens (Human).